The primary structure comprises 370 residues: MNRPYNFSAGPAAMPQEVLTEAAAEMLDWHGSGMSVMEMSHRGREFVSIYEQAHLDLRELLAVPDSFKILFMQGGGLAENAIVPLNLSARVSPAGAAGSADFVVTGGWSLKSQQEARKYCTVNIAASNESDGHTTLPGPASWQLSHGASYVHICSNETIHGVEYHTLPDLQALGSEAALVVDCSSHVASRPIDWSRVGLAFAGAQKNLGPAGLTLVVVREDLLGHALAVCPSAFNYKTVADNQSMFNTPPTYAIYIAGLVFQWLKRQGGIAAMEARNQAKAALLYDAIDNSQLYYNKVAPNCRSRMNVPFFLRDESLNDAFLAGAREHGLLQLKGHKSVGGMRASIYNAMPMEGVQALVNYLHEFQKRRS.

Residue Arg-42 participates in L-glutamate binding. Residues Trp-108, Thr-158, Asp-182, and Gln-205 each coordinate pyridoxal 5'-phosphate. Lys-206 is subject to N6-(pyridoxal phosphate)lysine. Pyridoxal 5'-phosphate is bound at residue 247–248; that stretch reads NT.

This sequence belongs to the class-V pyridoxal-phosphate-dependent aminotransferase family. SerC subfamily. Homodimer. Requires pyridoxal 5'-phosphate as cofactor.

The protein resides in the cytoplasm. It carries out the reaction O-phospho-L-serine + 2-oxoglutarate = 3-phosphooxypyruvate + L-glutamate. The catalysed reaction is 4-(phosphooxy)-L-threonine + 2-oxoglutarate = (R)-3-hydroxy-2-oxo-4-phosphooxybutanoate + L-glutamate. Its pathway is amino-acid biosynthesis; L-serine biosynthesis; L-serine from 3-phospho-D-glycerate: step 2/3. The protein operates within cofactor biosynthesis; pyridoxine 5'-phosphate biosynthesis; pyridoxine 5'-phosphate from D-erythrose 4-phosphate: step 3/5. Catalyzes the reversible conversion of 3-phosphohydroxypyruvate to phosphoserine and of 3-hydroxy-2-oxo-4-phosphonooxybutanoate to phosphohydroxythreonine. This Albidiferax ferrireducens (strain ATCC BAA-621 / DSM 15236 / T118) (Rhodoferax ferrireducens) protein is Phosphoserine aminotransferase.